The following is a 310-amino-acid chain: tRNA-cytidine(32) 2-sulfurtransferase (310 aa).

Residues 45–50 (SGGKDS) carry the PP-loop motif motif. Cysteine 120, cysteine 123, and cysteine 211 together coordinate [4Fe-4S] cluster.

This sequence belongs to the TtcA family. As to quaternary structure, homodimer. The cofactor is Mg(2+). [4Fe-4S] cluster is required as a cofactor.

Its subcellular location is the cytoplasm. The enzyme catalyses cytidine(32) in tRNA + S-sulfanyl-L-cysteinyl-[cysteine desulfurase] + AH2 + ATP = 2-thiocytidine(32) in tRNA + L-cysteinyl-[cysteine desulfurase] + A + AMP + diphosphate + H(+). Its pathway is tRNA modification. Functionally, catalyzes the ATP-dependent 2-thiolation of cytidine in position 32 of tRNA, to form 2-thiocytidine (s(2)C32). The sulfur atoms are provided by the cysteine/cysteine desulfurase (IscS) system. The sequence is that of tRNA-cytidine(32) 2-sulfurtransferase from Shewanella baltica (strain OS155 / ATCC BAA-1091).